The following is an 820-amino-acid chain: DNA mismatch repair protein MutS (820 aa).

Residue 618–625 (GPNMAGKS) participates in ATP binding.

Belongs to the DNA mismatch repair MutS family.

This protein is involved in the repair of mismatches in DNA. It is possible that it carries out the mismatch recognition step. This protein has a weak ATPase activity. The protein is DNA mismatch repair protein MutS of Chlamydia trachomatis serovar L2b (strain UCH-1/proctitis).